Reading from the N-terminus, the 132-residue chain is Small ribosomal subunit protein uS8c (132 aa).

It belongs to the universal ribosomal protein uS8 family. Part of the 30S ribosomal subunit.

It is found in the plastid. The protein localises to the chloroplast. One of the primary rRNA binding proteins, it binds directly to 16S rRNA central domain where it helps coordinate assembly of the platform of the 30S subunit. The polypeptide is Small ribosomal subunit protein uS8c (rps8) (Zygnema circumcarinatum (Green alga)).